The sequence spans 296 residues: Acetylglutamate kinase (296 aa).

Residues 69 to 70 (GG), Arg91, and Asn193 each bind substrate.

The protein belongs to the acetylglutamate kinase family. ArgB subfamily.

It localises to the cytoplasm. The enzyme catalyses N-acetyl-L-glutamate + ATP = N-acetyl-L-glutamyl 5-phosphate + ADP. It functions in the pathway amino-acid biosynthesis; L-arginine biosynthesis; N(2)-acetyl-L-ornithine from L-glutamate: step 2/4. Its function is as follows. Catalyzes the ATP-dependent phosphorylation of N-acetyl-L-glutamate. The polypeptide is Acetylglutamate kinase (Albidiferax ferrireducens (strain ATCC BAA-621 / DSM 15236 / T118) (Rhodoferax ferrireducens)).